Here is a 162-residue protein sequence, read N- to C-terminus: Corticoliberin (162 aa).

An N-terminal signal peptide occupies residues 1–24; it reads MKLNFLVTTVALLVAFPPPYECRA. Residues 25–119 constitute a propeptide that is removed on maturation; sequence IEGSSNQPAT…ALDSVERERR (95 aa). Phenylalanine amide is present on phenylalanine 160.

The protein belongs to the sauvagine/corticotropin-releasing factor/urotensin I family.

The protein resides in the secreted. This hormone from hypothalamus regulates the release of corticotropin from pituitary gland. The protein is Corticoliberin (crh) of Carassius auratus (Goldfish).